The chain runs to 699 residues: SHC SH2 domain-binding protein 1 homolog A (699 aa).

PbH1 repeat units follow at residues 480-502, 503-524, and 532-554; these read SAEL…EIYP, GSKC…LIKD, and IPKI…VLVK. A coiled-coil region spans residues 603-627; the sequence is AVEHTNNLEKDQGNLAIAKEEVECE.

The protein localises to the midbody. It localises to the cytoplasm. It is found in the cytoskeleton. The protein resides in the spindle. Functionally, may play a role in signaling pathways governing cellular proliferation. The sequence is that of SHC SH2 domain-binding protein 1 homolog A (shcbp1-a) from Xenopus laevis (African clawed frog).